The primary structure comprises 171 residues: 3-hydroxydecanoyl-[acyl-carrier-protein] dehydratase (171 aa).

The active site involves His-70.

It belongs to the thioester dehydratase family. FabA subfamily. Homodimer.

It localises to the cytoplasm. It carries out the reaction a (3R)-hydroxyacyl-[ACP] = a (2E)-enoyl-[ACP] + H2O. The catalysed reaction is (3R)-hydroxydecanoyl-[ACP] = (2E)-decenoyl-[ACP] + H2O. The enzyme catalyses (2E)-decenoyl-[ACP] = (3Z)-decenoyl-[ACP]. It participates in lipid metabolism; fatty acid biosynthesis. Necessary for the introduction of cis unsaturation into fatty acids. Catalyzes the dehydration of (3R)-3-hydroxydecanoyl-ACP to E-(2)-decenoyl-ACP and then its isomerization to Z-(3)-decenoyl-ACP. Can catalyze the dehydratase reaction for beta-hydroxyacyl-ACPs with saturated chain lengths up to 16:0, being most active on intermediate chain length. This Pseudomonas fluorescens (strain Pf0-1) protein is 3-hydroxydecanoyl-[acyl-carrier-protein] dehydratase.